We begin with the raw amino-acid sequence, 96 residues long: Glutamyl-tRNA(Gln) amidotransferase subunit C (96 aa).

This sequence belongs to the GatC family. Heterotrimer of A, B and C subunits.

The catalysed reaction is L-glutamyl-tRNA(Gln) + L-glutamine + ATP + H2O = L-glutaminyl-tRNA(Gln) + L-glutamate + ADP + phosphate + H(+). It catalyses the reaction L-aspartyl-tRNA(Asn) + L-glutamine + ATP + H2O = L-asparaginyl-tRNA(Asn) + L-glutamate + ADP + phosphate + 2 H(+). Functionally, allows the formation of correctly charged Asn-tRNA(Asn) or Gln-tRNA(Gln) through the transamidation of misacylated Asp-tRNA(Asn) or Glu-tRNA(Gln) in organisms which lack either or both of asparaginyl-tRNA or glutaminyl-tRNA synthetases. The reaction takes place in the presence of glutamine and ATP through an activated phospho-Asp-tRNA(Asn) or phospho-Glu-tRNA(Gln). This Pseudomonas aeruginosa (strain ATCC 15692 / DSM 22644 / CIP 104116 / JCM 14847 / LMG 12228 / 1C / PRS 101 / PAO1) protein is Glutamyl-tRNA(Gln) amidotransferase subunit C.